Here is a 354-residue protein sequence, read N- to C-terminus: Uroporphyrinogen decarboxylase (354 aa).

Substrate-binding positions include 27-31 (RQAGR), aspartate 77, tyrosine 154, threonine 209, and histidine 327.

It belongs to the uroporphyrinogen decarboxylase family. As to quaternary structure, homodimer.

The protein resides in the cytoplasm. It catalyses the reaction uroporphyrinogen III + 4 H(+) = coproporphyrinogen III + 4 CO2. It functions in the pathway porphyrin-containing compound metabolism; protoporphyrin-IX biosynthesis; coproporphyrinogen-III from 5-aminolevulinate: step 4/4. In terms of biological role, catalyzes the decarboxylation of four acetate groups of uroporphyrinogen-III to yield coproporphyrinogen-III. This chain is Uroporphyrinogen decarboxylase, found in Pseudomonas entomophila (strain L48).